A 147-amino-acid chain; its full sequence is Large ribosomal subunit protein uL15 (147 aa).

The tract at residues methionine 1–leucine 57 is disordered. The segment covering threonine 30–glycine 44 has biased composition (basic residues).

This sequence belongs to the universal ribosomal protein uL15 family. In terms of assembly, part of the 50S ribosomal subunit.

Its function is as follows. Binds to the 23S rRNA. The sequence is that of Large ribosomal subunit protein uL15 from Thermotoga neapolitana (strain ATCC 49049 / DSM 4359 / NBRC 107923 / NS-E).